The following is a 329-amino-acid chain: Cathepsin K (329 aa).

Positions 1 to 15 (MWGLKVLLLPVVSFA) are cleaved as a signal peptide. A propeptide spans 16–114 (LHPEEILDTQ…TLYIPDWEGR (99 aa)) (activation peptide). An N-linked (GlcNAc...) asparagine glycan is attached at N103. Cystine bridges form between C136–C177 and C170–C210. C139 is an active-site residue. N-linked (GlcNAc...) asparagine glycosylation is present at N268. The cysteines at positions 269 and 318 are disulfide-linked. Residues H276 and N296 contribute to the active site.

The protein belongs to the peptidase C1 family. Predominantly expressed in osteclasts (bones).

It is found in the lysosome. The protein resides in the secreted. Its subcellular location is the apical cell membrane. The catalysed reaction is Broad proteolytic activity. With small-molecule substrates and inhibitors, the major determinant of specificity is P2, which is preferably Leu, Met &gt; Phe, and not Arg.. Functionally, thiol protease involved in osteoclastic bone resorption and may participate partially in the disorder of bone remodeling. Displays potent endoprotease activity against fibrinogen at acid pH. May play an important role in extracellular matrix degradation. Involved in the release of thyroid hormone thyroxine (T4) by limited proteolysis of TG/thyroglobulin in the thyroid follicle lumen. The sequence is that of Cathepsin K (CTSK) from Oryctolagus cuniculus (Rabbit).